A 236-amino-acid polypeptide reads, in one-letter code: Small ribosomal subunit protein uS2c (236 aa).

This sequence belongs to the universal ribosomal protein uS2 family.

The protein resides in the plastid. It localises to the chloroplast. The chain is Small ribosomal subunit protein uS2c (rps2) from Nicotiana tabacum (Common tobacco).